Reading from the N-terminus, the 434-residue chain is Beta-glucuronosyltransferase GlcAT14B (434 aa).

Residues 1–21 (MKKLKSYYMQVRNQQQSLDRK) lie on the Cytoplasmic side of the membrane. Residues 22–42 (WILPLAIGSICSLFLLLLTNL) form a signal-anchor for type II membrane protein membrane-spanning segment. The Lumenal portion of the chain corresponds to 43–434 (ASSSGQTRLI…TENFRPRQCR (392 aa)). N-linked (GlcNAc...) asparagine glycosylation is found at asparagine 138, asparagine 187, asparagine 316, and asparagine 392.

The protein belongs to the glycosyltransferase 14 family.

It localises to the golgi apparatus membrane. Beta-glucuronosyltransferase involved in the biosynthesis of type II arabinogalactan (AG). Modifies both the beta-1,6-linked galactan and beta-1,3-linked galactan present in type II AG. The protein is Beta-glucuronosyltransferase GlcAT14B of Arabidopsis thaliana (Mouse-ear cress).